Consider the following 1132-residue polypeptide: Major DNA-binding protein (1132 aa).

Positions 1103-1132 (VEELFPSPGVPSLTVGKKRKIASLLSDLDL) are required for nuclear localization.

The protein belongs to the herpesviridae major DNA-binding protein family. As to quaternary structure, homooligomers. Forms double-helical filaments necessary for the formation of replication compartments within the host nucleus. Interacts with the origin-binding protein. Interacts with the helicase primase complex; this interaction stimulates primer synthesis activity of the helicase-primase complex. Interacts with the DNA polymerase. Interacts with the alkaline exonuclease; this interaction increases its nuclease processivity.

The protein resides in the host nucleus. Plays several crucial roles in viral infection. Participates in the opening of the viral DNA origin to initiate replication by interacting with the origin-binding protein. May disrupt loops, hairpins and other secondary structures present on ssDNA to reduce and eliminate pausing of viral DNA polymerase at specific sites during elongation. Promotes viral DNA recombination by performing strand-transfer, characterized by the ability to transfer a DNA strand from a linear duplex to a complementary single-stranded DNA circle. Can also catalyze the renaturation of complementary single strands. Additionally, reorganizes the host cell nucleus, leading to the formation of prereplicative sites and replication compartments. This process is driven by the protein which can form double-helical filaments in the absence of DNA. The protein is Major DNA-binding protein of Human herpesvirus 8 type P (isolate GK18) (HHV-8).